A 549-amino-acid chain; its full sequence is Glucose-6-phosphate isomerase (549 aa).

The active-site Proton donor is Glu-355. Active-site residues include His-386 and Lys-514.

Belongs to the GPI family.

The protein resides in the cytoplasm. The enzyme catalyses alpha-D-glucose 6-phosphate = beta-D-fructose 6-phosphate. The protein operates within carbohydrate biosynthesis; gluconeogenesis. It participates in carbohydrate degradation; glycolysis; D-glyceraldehyde 3-phosphate and glycerone phosphate from D-glucose: step 2/4. Its function is as follows. Catalyzes the reversible isomerization of glucose-6-phosphate to fructose-6-phosphate. This Desulfatibacillum aliphaticivorans protein is Glucose-6-phosphate isomerase.